Consider the following 237-residue polypeptide: Protein FEV (237 aa).

The ETS DNA-binding region spans 47 to 127; that stretch reads IQLWQFLLEL…HGKRYAYRFD (81 aa). Residues 129–237 form a may mediate active transcriptional repression region; the sequence is QGLAQACQPP…AASHLGGHYH (109 aa).

The protein belongs to the ETS family. Expressed in central serotonergic neurons.

The protein localises to the nucleus. Functions as a transcriptional regulator. May function as a transcriptional repressor. Functions in the differentiation and the maintenance of the central serotonergic neurons. May play a role in cell growth. The sequence is that of Protein FEV (Fev) from Mus musculus (Mouse).